Here is a 301-residue protein sequence, read N- to C-terminus: 2-dehydropantoate 2-reductase (301 aa).

NADP(+)-binding positions include 11–16 (GAGAMG), Asn-107, and Ala-133. Asn-107 contributes to the substrate binding site. Residue Lys-187 is the Proton donor of the active site. Asn-191, Asn-195, Asn-205, and Ser-251 together coordinate substrate. NADP(+) is bound at residue Glu-263.

The protein belongs to the ketopantoate reductase family.

It localises to the cytoplasm. The enzyme catalyses (R)-pantoate + NADP(+) = 2-dehydropantoate + NADPH + H(+). Its pathway is cofactor biosynthesis; (R)-pantothenate biosynthesis; (R)-pantoate from 3-methyl-2-oxobutanoate: step 2/2. Its function is as follows. Catalyzes the NADPH-dependent reduction of ketopantoate into pantoic acid. This is 2-dehydropantoate 2-reductase from Listeria innocua serovar 6a (strain ATCC BAA-680 / CLIP 11262).